The sequence spans 277 residues: Elongation factor Ts (277 aa).

The involved in Mg(2+) ion dislocation from EF-Tu stretch occupies residues 79–82 (TDFV).

Belongs to the EF-Ts family.

Its subcellular location is the cytoplasm. In terms of biological role, associates with the EF-Tu.GDP complex and induces the exchange of GDP to GTP. It remains bound to the aminoacyl-tRNA.EF-Tu.GTP complex up to the GTP hydrolysis stage on the ribosome. This Phytoplasma australiense protein is Elongation factor Ts.